A 381-amino-acid polypeptide reads, in one-letter code: Queuine tRNA-ribosyltransferase (381 aa).

Asp-92 serves as the catalytic Proton acceptor. Substrate is bound by residues 92–96 (DSGGF), Asp-146, Gln-190, and Gly-217. The interval 248-254 (GVGRPED) is RNA binding. Asp-267 (nucleophile) is an active-site residue. An RNA binding; important for wobble base 34 recognition region spans residues 272-276 (TRNAR). Residues Cys-305, Cys-307, Cys-310, and His-337 each contribute to the Zn(2+) site.

The protein belongs to the queuine tRNA-ribosyltransferase family. As to quaternary structure, homodimer. Within each dimer, one monomer is responsible for RNA recognition and catalysis, while the other monomer binds to the replacement base PreQ1. Zn(2+) is required as a cofactor.

It carries out the reaction 7-aminomethyl-7-carbaguanine + guanosine(34) in tRNA = 7-aminomethyl-7-carbaguanosine(34) in tRNA + guanine. It functions in the pathway tRNA modification; tRNA-queuosine biosynthesis. Functionally, catalyzes the base-exchange of a guanine (G) residue with the queuine precursor 7-aminomethyl-7-deazaguanine (PreQ1) at position 34 (anticodon wobble position) in tRNAs with GU(N) anticodons (tRNA-Asp, -Asn, -His and -Tyr). Catalysis occurs through a double-displacement mechanism. The nucleophile active site attacks the C1' of nucleotide 34 to detach the guanine base from the RNA, forming a covalent enzyme-RNA intermediate. The proton acceptor active site deprotonates the incoming PreQ1, allowing a nucleophilic attack on the C1' of the ribose to form the product. After dissociation, two additional enzymatic reactions on the tRNA convert PreQ1 to queuine (Q), resulting in the hypermodified nucleoside queuosine (7-(((4,5-cis-dihydroxy-2-cyclopenten-1-yl)amino)methyl)-7-deazaguanosine). This is Queuine tRNA-ribosyltransferase from Xanthomonas campestris pv. campestris (strain 8004).